The chain runs to 68 residues: Protein transport protein Sec61 gamma-2 subunit (68 aa).

Over 1 to 32 (MDKVVKFAEPGRAFAKDSIRLVKRCTKPDRKE) the chain is Cytoplasmic. Residues 33–61 (FQKIAIATAVGFCIMGFIGFFVKLIHIPI) traverse the membrane as a helical segment. The Extracellular portion of the chain corresponds to 62 to 68 (NNIIVGS).

This sequence belongs to the SecE/SEC61-gamma family. In terms of assembly, heterotrimeric complex composed of SEC61-alpha, SEC61-beta and SEC61-gamma.

It localises to the endoplasmic reticulum membrane. Necessary for protein translocation in the endoplasmic reticulum. This chain is Protein transport protein Sec61 gamma-2 subunit (Sec61gamma), found in Drosophila melanogaster (Fruit fly).